The sequence spans 20 residues: LHSNLEYQYRYSGRVASGIP.

In terms of domain architecture, Vitellogenin spans 1 to 20 (LHSNLEYQYRYSGRVASGIP).

Secreted into the hemolymph.

The protein localises to the secreted. It is found in the extracellular space. In terms of biological role, involved in lipid transport. Plays a role in hemolymph clotting. May be involved in wound healing in the cuticle. The sequence is that of Fibrinogen from Pacifastacus leniusculus (Signal crayfish).